The following is an 836-amino-acid chain: Outer membrane usher protein PapC (836 aa).

The first 24 residues, 1 to 24 (MKDRIPFAVNNITCVILLSLFCNA), serve as a signal peptide directing secretion. A disulfide bond links cysteine 814 and cysteine 832.

The protein belongs to the fimbrial export usher family.

It is found in the cell outer membrane. In terms of biological role, involved in the export and assembly of pili subunits across the outer membrane. Forms a hexameric ring-shaped pore in the outer bacterial membrane. The 2 nanometer-diameter pore allows the passage of the thin tip fibrillum. As for the rod, it probably unwinds into linear fibers which would therefore be narrow enough to pass through the pore. In Escherichia coli, this protein is Outer membrane usher protein PapC (papC).